We begin with the raw amino-acid sequence, 397 residues long: S-adenosylmethionine synthase (397 aa).

Position 16 (histidine 16) interacts with ATP. Residue aspartate 18 coordinates Mg(2+). Glutamate 44 serves as a coordination point for K(+). Positions 57 and 100 each coordinate L-methionine. The segment at 100–110 is flexible loop; the sequence is QSPDIAQGVNE. ATP is bound by residues 175–177, 242–243, aspartate 251, 257–258, alanine 274, and lysine 278; these read DAK, RF, and RK. Residue aspartate 251 coordinates L-methionine. Lysine 282 serves as a coordination point for L-methionine.

Belongs to the AdoMet synthase family. Homotetramer; dimer of dimers. It depends on Mg(2+) as a cofactor. Requires K(+) as cofactor.

It is found in the cytoplasm. It catalyses the reaction L-methionine + ATP + H2O = S-adenosyl-L-methionine + phosphate + diphosphate. Its pathway is amino-acid biosynthesis; S-adenosyl-L-methionine biosynthesis; S-adenosyl-L-methionine from L-methionine: step 1/1. Its function is as follows. Catalyzes the formation of S-adenosylmethionine (AdoMet) from methionine and ATP. The overall synthetic reaction is composed of two sequential steps, AdoMet formation and the subsequent tripolyphosphate hydrolysis which occurs prior to release of AdoMet from the enzyme. The chain is S-adenosylmethionine synthase from Streptococcus thermophilus (strain ATCC BAA-250 / LMG 18311).